A 732-amino-acid chain; its full sequence is Polyribonucleotide nucleotidyltransferase (732 aa).

2 residues coordinate Mg(2+): aspartate 516 and aspartate 522. Positions 582-642 constitute a KH domain; the sequence is PSSHTITVHP…PKVIAACDYI (61 aa). An S1 motif domain is found at 659-726; the sequence is GDILKGKIKR…KGHKIELGLR (68 aa).

Belongs to the polyribonucleotide nucleotidyltransferase family. The cofactor is Mg(2+).

It localises to the cytoplasm. It catalyses the reaction RNA(n+1) + phosphate = RNA(n) + a ribonucleoside 5'-diphosphate. In terms of biological role, involved in mRNA degradation. Catalyzes the phosphorolysis of single-stranded polyribonucleotides processively in the 3'- to 5'-direction. The chain is Polyribonucleotide nucleotidyltransferase from Nitratiruptor sp. (strain SB155-2).